The sequence spans 514 residues: GMP synthase [glutamine-hydrolyzing] (514 aa).

The 191-residue stretch at 9 to 199 (KIIVLDFGSQ…ALNVCGCKGD (191 aa)) folds into the Glutamine amidotransferase type-1 domain. The Nucleophile role is filled by Cys-86. Residues His-173 and Glu-175 contribute to the active site. The region spanning 200–389 (WTMENFSEVE…LGMPDAIVWR (190 aa)) is the GMPS ATP-PPase domain. 227-233 (SGGVDSS) provides a ligand contact to ATP.

In terms of assembly, homodimer.

It carries out the reaction XMP + L-glutamine + ATP + H2O = GMP + L-glutamate + AMP + diphosphate + 2 H(+). Its pathway is purine metabolism; GMP biosynthesis; GMP from XMP (L-Gln route): step 1/1. Functionally, catalyzes the synthesis of GMP from XMP. This is GMP synthase [glutamine-hydrolyzing] from Listeria monocytogenes serotype 4b (strain F2365).